The primary structure comprises 646 residues: Threonine--tRNA ligase (646 aa).

The TGS domain maps to 1–61; that stretch reads MIKITFPDGS…NEDASVVLYK (61 aa). The segment at 242-541 is catalytic; it reads DHRKIGKEMQ…LIEHTAGKFP (300 aa). Residues C337, H388, and H518 each coordinate Zn(2+).

Belongs to the class-II aminoacyl-tRNA synthetase family. As to quaternary structure, homodimer. Requires Zn(2+) as cofactor.

Its subcellular location is the cytoplasm. It carries out the reaction tRNA(Thr) + L-threonine + ATP = L-threonyl-tRNA(Thr) + AMP + diphosphate + H(+). In terms of biological role, catalyzes the attachment of threonine to tRNA(Thr) in a two-step reaction: L-threonine is first activated by ATP to form Thr-AMP and then transferred to the acceptor end of tRNA(Thr). Also edits incorrectly charged L-seryl-tRNA(Thr). This is Threonine--tRNA ligase from Bacteroides fragilis (strain YCH46).